Reading from the N-terminus, the 152-residue chain is Transcriptional regulator MraZ (152 aa).

2 SpoVT-AbrB domains span residues 5–52 (ATQI…TLSE) and 81–124 (ASEC…DEQA).

It belongs to the MraZ family. In terms of assembly, forms oligomers.

Its subcellular location is the cytoplasm. The protein localises to the nucleoid. Functionally, negatively regulates its own expression and that of the subsequent genes in the proximal part of the division and cell wall (dcw) gene cluster. Acts by binding directly to DNA. May also regulate the expression of genes outside the dcw cluster. This is Transcriptional regulator MraZ from Photorhabdus laumondii subsp. laumondii (strain DSM 15139 / CIP 105565 / TT01) (Photorhabdus luminescens subsp. laumondii).